Here is a 238-residue protein sequence, read N- to C-terminus: Zinc import ATP-binding protein ZnuC (238 aa).

Positions 5–220 (IQLNNISVNF…SEFIAIFGNI (216 aa)) constitute an ABC transporter domain. Residue 37–44 (GPNGAGKS) coordinates ATP.

The protein belongs to the ABC transporter superfamily. Zinc importer (TC 3.A.1.15.5) family. In terms of assembly, the complex is composed of two ATP-binding proteins (ZnuC), two transmembrane proteins (ZnuB) and a solute-binding protein (ZnuA).

Its subcellular location is the cell membrane. The enzyme catalyses Zn(2+)(out) + ATP(in) + H2O(in) = Zn(2+)(in) + ADP(in) + phosphate(in) + H(+)(in). Part of the ABC transporter complex ZnuABC involved in zinc import. Responsible for energy coupling to the transport system. This is Zinc import ATP-binding protein ZnuC from Buchnera aphidicola subsp. Baizongia pistaciae (strain Bp).